A 418-amino-acid polypeptide reads, in one-letter code: Serine hydroxymethyltransferase (418 aa).

Residues Leu-121 and 125–127 (GHL) each bind (6S)-5,6,7,8-tetrahydrofolate. The residue at position 230 (Lys-230) is an N6-(pyridoxal phosphate)lysine. (6S)-5,6,7,8-tetrahydrofolate contacts are provided by residues Glu-246 and 355-357 (SPF).

Belongs to the SHMT family. Homodimer. It depends on pyridoxal 5'-phosphate as a cofactor.

The protein resides in the cytoplasm. It catalyses the reaction (6R)-5,10-methylene-5,6,7,8-tetrahydrofolate + glycine + H2O = (6S)-5,6,7,8-tetrahydrofolate + L-serine. It participates in one-carbon metabolism; tetrahydrofolate interconversion. The protein operates within amino-acid biosynthesis; glycine biosynthesis; glycine from L-serine: step 1/1. Functionally, catalyzes the reversible interconversion of serine and glycine with tetrahydrofolate (THF) serving as the one-carbon carrier. This reaction serves as the major source of one-carbon groups required for the biosynthesis of purines, thymidylate, methionine, and other important biomolecules. Also exhibits THF-independent aldolase activity toward beta-hydroxyamino acids, producing glycine and aldehydes, via a retro-aldol mechanism. The chain is Serine hydroxymethyltransferase from Streptococcus pneumoniae serotype 2 (strain D39 / NCTC 7466).